The following is a 185-amino-acid chain: MELVVTSRETDKKSLLKKIRQTGGIPAVIYSGGKSLANIVVDAHVFGKFLSSLESGALSSTIFSLSYEGRTIKALVKDIQYQVTSYRVIHLDFEELIEDRDVKLNIPIRCINAVDCVGVKLGGSLRQVIRAMRVVCKPKDIVPCLELDVRSLGLSQTRKLADINIPAGLRPITPLKEVVVTVSRR.

It belongs to the bacterial ribosomal protein bL25 family. CTC subfamily. Part of the 50S ribosomal subunit; part of the 5S rRNA/L5/L18/L25 subcomplex. Contacts the 5S rRNA. Binds to the 5S rRNA independently of L5 and L18.

Functionally, this is one of the proteins that binds to the 5S RNA in the ribosome where it forms part of the central protuberance. This chain is Large ribosomal subunit protein bL25, found in Chlamydia caviae (strain ATCC VR-813 / DSM 19441 / 03DC25 / GPIC) (Chlamydophila caviae).